A 473-amino-acid polypeptide reads, in one-letter code: Adenosylhomocysteinase (473 aa).

3 residues coordinate substrate: threonine 60, aspartate 135, and glutamate 197. An NAD(+)-binding site is contributed by 198–200; that stretch reads TTT. Substrate-binding residues include lysine 227 and aspartate 231. NAD(+)-binding positions include asparagine 232, 261 to 266, glutamate 284, asparagine 319, 340 to 342, and asparagine 385; these read GFGDVG and IGH.

The protein belongs to the adenosylhomocysteinase family. NAD(+) is required as a cofactor.

It localises to the cytoplasm. It catalyses the reaction S-adenosyl-L-homocysteine + H2O = L-homocysteine + adenosine. The protein operates within amino-acid biosynthesis; L-homocysteine biosynthesis; L-homocysteine from S-adenosyl-L-homocysteine: step 1/1. Functionally, may play a key role in the regulation of the intracellular concentration of adenosylhomocysteine. The protein is Adenosylhomocysteinase of Bradyrhizobium diazoefficiens (strain JCM 10833 / BCRC 13528 / IAM 13628 / NBRC 14792 / USDA 110).